Here is a 151-residue protein sequence, read N- to C-terminus: UPF0208 membrane protein PC1_2779 (151 aa).

A run of 2 helical transmembrane segments spans residues 46 to 66 (FGIR…IALG) and 69 to 89 (LGPA…GLWW).

This sequence belongs to the UPF0208 family.

The protein localises to the cell inner membrane. The chain is UPF0208 membrane protein PC1_2779 from Pectobacterium carotovorum subsp. carotovorum (strain PC1).